A 677-amino-acid chain; its full sequence is Polyunsaturated fatty acid lipoxygenase ALOX15B (677 aa).

The 124-residue stretch at 2 to 125 folds into the PLAT domain; it reads AKFRVRVSTG…ELVLREGAAK (124 aa). 8 residues coordinate Ca(2+): Gly-15, Gly-17, Asp-39, His-40, Gly-42, Glu-44, Asp-86, and Ala-87. Residues 126 to 677 form the Lipoxygenase domain; the sequence is VSWQDHHRTL…PPLIENSVSI (552 aa). The Fe cation site is built by His-374, His-379, His-554, and Ile-677.

It belongs to the lipoxygenase family. It depends on Fe cation as a cofactor.

It is found in the cytoplasm. The protein resides in the cytosol. The protein localises to the cell membrane. Its subcellular location is the cytoskeleton. It localises to the membrane. It is found in the cell junction. The protein resides in the adherens junction. The protein localises to the focal adhesion. Its subcellular location is the nucleus. It carries out the reaction (5Z,8Z,11Z,14Z)-eicosatetraenoate + O2 = (15S)-hydroperoxy-(5Z,8Z,11Z,13E)-eicosatetraenoate. The catalysed reaction is (9Z,12Z)-octadecadienoate + O2 = 13-hydroperoxy-(9Z,11E)-octadecadienoate. The enzyme catalyses (5S)-hydroxy-(6E,8Z,11Z,14Z)-eicosatetraenoate + O2 = (5S)-hydroxy-(15S)-hydroperoxy-(6E,8Z,11Z,13E)-eicosatetraenoate. It catalyses the reaction (5Z,8Z,11Z,14Z)-eicosatetraenoate + O2 = 5-hydroperoxy-(6E,8Z,11Z,14Z)-eicosatetraenoate. It carries out the reaction (5S,6R)-dihydroxy-(7E,9E,11Z,14Z)-eicosatetraenoate + O2 = (5S,6R)-dihydroxy-(15S)-hydroperoxy-(7E,9E,11Z,13E)-eicosatetraenoate. The catalysed reaction is (5S)-hydroperoxy-(6E,8Z,11Z,14Z)-eicosatetraenoate + O2 = (5S,15S)-dihydroperoxy-(6E,8Z,11Z,13E)-eicosatetraenoate. The enzyme catalyses 2-(5Z,8Z,11Z,14Z-eicosatetraenoyl)-glycerol + O2 = 2-[15(S)-hydroperoxy-(5Z,8Z,11Z,13E)-eicosatetraenoyl]-glycerol. It catalyses the reaction (8S)-hydroperoxy-(5Z,9E,11Z,14Z)-eicosatetraenoate + O2 = (8S,15S)-dihydroperoxy-(5Z,9E,11Z,13E)-eicosatetraenoate. It carries out the reaction N-(5Z,8Z,11Z,14Z)-eicosatetraenoyl-L-alanine + O2 = N-(15S)-hydroperoxy-(5Z,8Z,11Z,13E)-eicosatetraenoyl-alanine. The catalysed reaction is N-(5Z,8Z,11Z,14Z)-eicosatetraenoyl-gamma-aminobutanoate + O2 = N-(15S)-hydroperoxy-(5Z,8Z,11Z,13E)-eicosatetraenoyl-gamma-aminobutanoate. The enzyme catalyses N-(5Z,8Z,11Z,14Z)-eicosatetraenoyl-glycine + O2 = N-(15S)-hydroperoxy-(5Z,8Z,11Z,13E)-eicosatetraenoyl-glycine. It catalyses the reaction N-(5Z,8Z,11Z,14Z)-eicosatetraenoyl-taurine + O2 = N-(15S)-hydroperoxy-(5Z,8Z,11Z,13E)-eicosatetraenoyl-taurine. It carries out the reaction 2-(5Z,8Z,11Z,14Z-eicosatetraenoyl)-glycerol + O2 = 2-[12-hydroperoxy-(5Z,8Z,10E,14Z)-eicosatetraenoyl]-glycerol. The catalysed reaction is 1-octadecanoyl-2-(5Z,8Z,11Z,14Z-eicosatetraenoyl)-sn-glycero-3-phosphocholine + O2 = 1-octadecanoyl-2-(15-hydroperoxy-5Z,8Z,11Z,13E-eicosatetraenoyl)-sn-glycero-3-phosphocholine. The enzyme catalyses a 1-acyl-2-(5Z,8Z,11Z,14Z-eicosatetraenoyl)-sn-glycero-3-phospho-(1D-myo-inositol) + O2 = a 1-acyl-2-(15-hydroperoxy-5Z,8Z,11Z,13E-eicosatetraenoyl)-sn-glycero-3-phospho-(1D-myo-inositol). It catalyses the reaction a 1-acyl-2-(8Z,11Z,14Z-eicosatrienoyl)-sn-glycero-3-phospho-(1D-myo-inositol) + O2 = a 1-acyl-2-(15-hydroperoxy-8Z,11Z,13E-eicosatrienoyl)-sn-glycero-3-phospho-(1D-myo-inositol). It carries out the reaction 1-octadecanoyl-2-(5Z,8Z,11Z,14Z)-eicosatetraenoyl-sn-glycero-3-phosphoethanolamine + O2 = 1-octadecanoyl-2-(15-hydroperoxy-5Z,8Z,11Z,13E-eicosatetraenoyl)-sn-glycero-3-phosphoethanolamine. The catalysed reaction is 1-octadecanoyl-2-(5Z,8Z,11Z,14Z-eicosatetraenoyl)-sn-glycero-3-phospho-(1D-myo-inositol) + O2 = 1-octadecanoyl-2-(15-hydroperoxy-5Z,8Z,11Z,13E-eicosatetraenoyl)-sn-glycero-3-phospho-(1D-myo-inositol). The enzyme catalyses (8Z,11Z,14Z)-eicosatrienoate + O2 = 15-hydroperoxy-(8Z,11Z,13E)-eicosatrienoate. It catalyses the reaction (7S)-hydroperoxy-(4Z,8E,10Z,13Z,16Z,19Z)-docosahexaenoate + O2 = (7S,17S)-dihydroperoxy-(4Z,8E,10Z,13Z,15E,19Z)-docosahexaenoate. It participates in lipid metabolism; hydroperoxy eicosatetraenoic acid biosynthesis. Non-heme iron-containing dioxygenase that catalyzes the stereo-specific peroxidation of free and esterified polyunsaturated fatty acids (PUFAs) generating a spectrum of bioactive lipid mediators. Inserts a peroxyl group at C15 of arachidonate ((5Z,8Z,11Z,14Z)-eicosatetraenoate) producing (15S)-hydroperoxyeicosatetraenoate/(15S)-HPETE. Also peroxidizes linoleate ((9Z,12Z)-octadecadienoate) to 13-hydroperoxyoctadecadienoate/13-HPODE. Oxygenates arachidonyl derivatives such as 2-arachidonoylglycerol (2-AG) leading to the production and extracellular release of 15-hydroxyeicosatetraenoyl glycerol (15-HETE-G) that acts as a peroxisome proliferator-activated receptor alpha agonist. Has the ability to efficiently class-switch ALOX5 pro-inflammatory mediators into anti-inflammatory intermediates. Participates in the sequential oxidations of DHA ((4Z,7Z,10Z,13Z,16Z,19Z)-docosahexaenoate) to generate specialized pro-resolving mediators (SPMs) resolvin D5 ((7S,17S)-diHPDHA), which can actively down-regulate the immune response and have anti-aggregation properties with platelets. In addition to free PUFAs hydrolyzed from phospholipids, it directly oxidizes PUFAs esterified to membrane-bound phospholipids. Has no detectable 8S-lipoxygenase activity on arachidonate but reacts with (8S)-HPETE to produce (8S,15S)-diHPETE. May regulate progression through the cell cycle and cell proliferation. May also regulate cytokine secretion by macrophages and therefore play a role in the immune response. May also regulate macrophage differentiation into proatherogenic foam cells. The sequence is that of Polyunsaturated fatty acid lipoxygenase ALOX15B from Rattus norvegicus (Rat).